Consider the following 556-residue polypeptide: Formate--tetrahydrofolate ligase (556 aa).

65–72 (TPAGEGKS) is an ATP binding site.

The protein belongs to the formate--tetrahydrofolate ligase family.

It carries out the reaction (6S)-5,6,7,8-tetrahydrofolate + formate + ATP = (6R)-10-formyltetrahydrofolate + ADP + phosphate. Its pathway is one-carbon metabolism; tetrahydrofolate interconversion. The sequence is that of Formate--tetrahydrofolate ligase from Enterococcus faecalis (strain ATCC 700802 / V583).